A 205-amino-acid polypeptide reads, in one-letter code: Probable GTP-binding protein EngB (205 aa).

Residues asparagine 22–lysine 196 form the EngB-type G domain. GTP-binding positions include glycine 30–serine 37, glycine 57–leucine 61, aspartate 76–glycine 79, threonine 143–aspartate 146, and phenylalanine 175–alanine 177. Mg(2+) is bound by residues serine 37 and threonine 59.

Belongs to the TRAFAC class TrmE-Era-EngA-EngB-Septin-like GTPase superfamily. EngB GTPase family. It depends on Mg(2+) as a cofactor.

Functionally, necessary for normal cell division and for the maintenance of normal septation. This chain is Probable GTP-binding protein EngB, found in Desulforamulus reducens (strain ATCC BAA-1160 / DSM 100696 / MI-1) (Desulfotomaculum reducens).